A 316-amino-acid polypeptide reads, in one-letter code: Triplex capsid protein 2 (316 aa).

The protein belongs to the herpesviridae TRX2 protein family. In terms of assembly, interacts with TRX1 and major capisd protein/MCP.

The protein resides in the virion. It is found in the host nucleus. Functionally, structural component of the T=16 icosahedral capsid. The capsid is composed of pentamers and hexamers of major capsid protein/MCP, which are linked together by heterotrimers called triplexes. These triplexes are formed by a single molecule of triplex protein 1/TRX1 and two copies of triplex protein 2/TRX2. Additionally, TRX1 is required for efficient transport of TRX2 to the nucleus, which is the site of capsid assembly. This chain is Triplex capsid protein 2, found in Homo sapiens (Human).